Reading from the N-terminus, the 950-residue chain is Glycine dehydrogenase (decarboxylating) (950 aa).

Residue K698 is modified to N6-(pyridoxal phosphate)lysine.

This sequence belongs to the GcvP family. As to quaternary structure, the glycine cleavage system is composed of four proteins: P, T, L and H. Requires pyridoxal 5'-phosphate as cofactor.

It carries out the reaction N(6)-[(R)-lipoyl]-L-lysyl-[glycine-cleavage complex H protein] + glycine + H(+) = N(6)-[(R)-S(8)-aminomethyldihydrolipoyl]-L-lysyl-[glycine-cleavage complex H protein] + CO2. Functionally, the glycine cleavage system catalyzes the degradation of glycine. The P protein binds the alpha-amino group of glycine through its pyridoxal phosphate cofactor; CO(2) is released and the remaining methylamine moiety is then transferred to the lipoamide cofactor of the H protein. This Neisseria meningitidis serogroup A / serotype 4A (strain DSM 15465 / Z2491) protein is Glycine dehydrogenase (decarboxylating).